Reading from the N-terminus, the 197-residue chain is Viral polyamine acetyltransferase (197 aa).

Asn22 is an acetyl-CoA binding site. Residue Glu27 is part of the active site. Residues 102 to 182 (SYTPDDKCLY…YQYGITKPFD (81 aa)) enclose the N-acetyltransferase domain. Residues Ile115, Ser117, Gly121, Gly123, Ala125, Thr126, Thr149, Asn150, and Lys159 each contribute to the acetyl-CoA site.

It belongs to the acetyltransferase family.

The catalysed reaction is spermine + acetyl-CoA = N(1)-acetylspermine + CoA + H(+). It carries out the reaction spermidine + acetyl-CoA = N(1)-acetylspermidine + CoA + H(+). The enzyme catalyses spermidine + acetyl-CoA = N(8)-acetylspermidine + CoA + H(+). It catalyses the reaction putrescine + acetyl-CoA = N-acetylputrescine + CoA + H(+). The catalysed reaction is cadaverine + acetyl-CoA = N-acetylcadaverine + CoA + H(+). It carries out the reaction sym-homospermidine + acetyl-CoA = N(1)-acetyl-sym-homospermidine + CoA + H(+). Acetylates polyamines such as spermine, spermidine, cadaverine, homospermidine and putrescine (the latter with low efficiency). May play a role in the regulation of polyamine catabolism in the host during viral replication. The polypeptide is Viral polyamine acetyltransferase (Chlorella (PBCV-1)).